The chain runs to 251 residues: Glucosamine-6-phosphate deaminase (251 aa).

The Proton acceptor; for enolization step role is filled by aspartate 67. The For ring-opening step role is filled by asparagine 136. Residue histidine 138 is the Proton acceptor; for ring-opening step of the active site. The active-site For ring-opening step is the glutamate 143.

This sequence belongs to the glucosamine/galactosamine-6-phosphate isomerase family. NagB subfamily.

It catalyses the reaction alpha-D-glucosamine 6-phosphate + H2O = beta-D-fructose 6-phosphate + NH4(+). It participates in amino-sugar metabolism; N-acetylneuraminate degradation; D-fructose 6-phosphate from N-acetylneuraminate: step 5/5. In terms of biological role, catalyzes the reversible isomerization-deamination of glucosamine 6-phosphate (GlcN6P) to form fructose 6-phosphate (Fru6P) and ammonium ion. The chain is Glucosamine-6-phosphate deaminase from Geobacillus sp. (strain WCH70).